The primary structure comprises 248 residues: Probable transcriptional regulatory protein FTM_1203 (248 aa).

This sequence belongs to the TACO1 family.

Its subcellular location is the cytoplasm. This is Probable transcriptional regulatory protein FTM_1203 from Francisella tularensis subsp. mediasiatica (strain FSC147).